The following is a 315-amino-acid chain: Acetaldehyde dehydrogenase (315 aa).

Residue 13 to 16 (SGNI) coordinates NAD(+). Cys143 (acyl-thioester intermediate) is an active-site residue. Residues 174 to 182 (SAGPGTRKN) and Asn285 each bind NAD(+).

This sequence belongs to the acetaldehyde dehydrogenase family.

The catalysed reaction is acetaldehyde + NAD(+) + CoA = acetyl-CoA + NADH + H(+). This Shewanella woodyi (strain ATCC 51908 / MS32) protein is Acetaldehyde dehydrogenase.